Consider the following 598-residue polypeptide: MTDLTTSDSLQPAWQTRDHLDDPVIGELSNRFGPEAFVVQATRTGMPVVWVKREQLLEVMSFLRKQPKPYVMLFDLHGVDERLRTHRQGLPDADFSVFYHLLSIERNRDIMLKVALSEKDLHVSTATKIFPNANWYERETWEMFGITFDGHPHLTRIMMPQSWEGHPLRKDYPARATEFDPYVLTKQKEDLEMESLTFKPEDWGMKRGTENEDFMFLNLGPNHPSSHGAFRIVLQLDGEEIIDCVPDVGYHHRGAEKMGERQSWHSYIPYTDRIEYLGGCVNEMPYVLAVEKLAGIVVPDRVNTIRVMLSELFRINSHLLYISTFIQDVGAMTPVFFAFTDRQKVYDVIEAITGFRMHPAWFRIGGVAHDLPRGWERLLRDFLDWMPKRLDSYVKAALQNSILKGRSVGVAAYNAKEALEWGVTGAGLRATGVEFDVRKWRPYSGYENFDFEVPVGNNGDCYDRVMLKVEELRQSLRILEQCYKNMPEGPFKADHPLTTPPPKERTLQHIETLITHFLQVSWGPVMPANESFQMIEATKGINSYYLTSDGSTMSYRTRIRTPSYAHLQQIPSVIRGSLVSDLIVYLGSIDFVMSDVDR.

The tract at residues 1–189 is NADH dehydrogenase I subunit C; it reads MTDLTTSDSL…DPYVLTKQKE (189 aa). Residues 213 to 598 form an NADH dehydrogenase I subunit D region; that stretch reads DFMFLNLGPN…IDFVMSDVDR (386 aa).

This sequence in the N-terminal section; belongs to the complex I 30 kDa subunit family. It in the C-terminal section; belongs to the complex I 49 kDa subunit family. In terms of assembly, NDH-1 is composed of 13 different subunits. Subunits NuoB, CD, E, F, and G constitute the peripheral sector of the complex.

It is found in the cell inner membrane. The catalysed reaction is a quinone + NADH + 5 H(+)(in) = a quinol + NAD(+) + 4 H(+)(out). In terms of biological role, NDH-1 shuttles electrons from NADH, via FMN and iron-sulfur (Fe-S) centers, to quinones in the respiratory chain. The immediate electron acceptor for the enzyme in this species is believed to be ubiquinone. Couples the redox reaction to proton translocation (for every two electrons transferred, four hydrogen ions are translocated across the cytoplasmic membrane), and thus conserves the redox energy in a proton gradient. This Yersinia pseudotuberculosis serotype O:1b (strain IP 31758) protein is NADH-quinone oxidoreductase subunit C/D.